The sequence spans 176 residues: ATP-dependent protease subunit HslV (176 aa).

Thr-2 is an active-site residue. Na(+) contacts are provided by Ala-157, Cys-160, and Thr-163.

The protein belongs to the peptidase T1B family. HslV subfamily. In terms of assembly, a double ring-shaped homohexamer of HslV is capped on each side by a ring-shaped HslU homohexamer. The assembly of the HslU/HslV complex is dependent on binding of ATP.

The protein localises to the cytoplasm. It catalyses the reaction ATP-dependent cleavage of peptide bonds with broad specificity.. Allosterically activated by HslU binding. Functionally, protease subunit of a proteasome-like degradation complex believed to be a general protein degrading machinery. This is ATP-dependent protease subunit HslV from Buchnera aphidicola subsp. Acyrthosiphon pisum (strain APS) (Acyrthosiphon pisum symbiotic bacterium).